A 367-amino-acid polypeptide reads, in one-letter code: Cellular tumor antigen p53 (367 aa).

The interval 1-47 (MEEENISLPLSQDTFQDLWDNVSAPPISTIQTAALENEAWPAERQMN) is transcription activation (acidic). A DNA-binding region spans residues 86 to 273 (DYPGEYGFKL…KTEETNSTKM (188 aa)). The Zn(2+) site is built by C160, H163, C219, and C223. Residues 254–261 (RVCACPGR) form an interaction with DNA region. A compositionally biased stretch (basic and acidic residues) spans 262-279 (DRKTEETNSTKMQNDAKD). Disordered stretches follow at residues 262 to 306 (DRKT…AEED) and 332 to 367 (DLLE…SDSD). The short motif at 282–300 (KRKSVPTPDSTTIKKSKTA) is the Bipartite nuclear localization signal element. Low complexity predominate over residues 291 to 302 (STTIKKSKTASS). The oligomerization stretch occupies residues 308–337 (NEVYTLQIRGRKRYEMLKKINDGLDLLENK). The Nuclear export signal motif lies at 322–333 (EMLKKINDGLDL). The segment at 342 to 363 (ATHRPDGPIPPSGKRLLHRGEK) is basic (repression of DNA-binding).

It belongs to the p53 family. As to quaternary structure, binds DNA as a homotetramer. Requires Zn(2+) as cofactor.

The protein resides in the cytoplasm. It is found in the nucleus. Multifunctional transcription factor that induces cell cycle arrest, DNA repair or apoptosis upon binding to its target DNA sequence. Acts as a tumor suppressor in many tumor types; induces growth arrest or apoptosis depending on the physiological circumstances and cell type. Negatively regulates cell division by controlling expression of a set of genes required for this process. One of the activated genes is an inhibitor of cyclin-dependent kinases. Apoptosis induction seems to be mediated either by stimulation of BAX and FAS antigen expression, or by repression of Bcl-2 expression. This chain is Cellular tumor antigen p53 (tp53), found in Tetraodon miurus (Congo puffer).